Here is a 594-residue protein sequence, read N- to C-terminus: Zinc finger protein 703 (594 aa).

Residues 1–14 show a composition bias toward polar residues; it reads MSDSPAGSNPRTPE. 3 disordered regions span residues 1 to 37, 100 to 298, and 345 to 370; these read MSDS…VPAV, TCSQ…GHVA, and LVGG…LTGA. Serine 2 is modified (N-acetylserine). Residues 17-30 show a composition bias toward gly residues; it reads GSGGGSSSGGGGGK. Low complexity-rich tracts occupy residues 134-145, 177-191, and 212-225; these read RSAPGAASAAAA, GSSS…SSSS, and GASV…SSPG. The segment covering 246 to 256 has biased composition (basic and acidic residues); that stretch reads ELDKKEQEAKP. Serine 257 is subject to Phosphoserine. Gly residues predominate over residues 345–356; it reads LVGGQLSGGLGL. A C2H2-type zinc finger spans residues 460-488; the sequence is HSCNWVAASGPCDKRFATSEELLSHLRTH. Position 584 is an omega-N-methylarginine (arginine 584).

It belongs to the Elbow/Noc family. In terms of assembly, interacts with DCAF7 and PHB2. Interacts with TLE4; increases transcriptional repression. Expressed in mammary epithelium.

It localises to the nucleus. It is found in the cytoplasm. Functionally, transcriptional corepressor which does not bind directly to DNA and may regulate transcription through recruitment of histone deacetylases to gene promoters. Regulates cell adhesion, migration and proliferation. May be required for segmental gene expression during hindbrain development. The chain is Zinc finger protein 703 (Znf703) from Mus musculus (Mouse).